We begin with the raw amino-acid sequence, 342 residues long: UDP-3-O-acylglucosamine N-acyltransferase (342 aa).

His253 serves as the catalytic Proton acceptor.

Belongs to the transferase hexapeptide repeat family. LpxD subfamily. Homotrimer.

The enzyme catalyses a UDP-3-O-[(3R)-3-hydroxyacyl]-alpha-D-glucosamine + a (3R)-hydroxyacyl-[ACP] = a UDP-2-N,3-O-bis[(3R)-3-hydroxyacyl]-alpha-D-glucosamine + holo-[ACP] + H(+). The protein operates within bacterial outer membrane biogenesis; LPS lipid A biosynthesis. Its function is as follows. Catalyzes the N-acylation of UDP-3-O-acylglucosamine using 3-hydroxyacyl-ACP as the acyl donor. Is involved in the biosynthesis of lipid A, a phosphorylated glycolipid that anchors the lipopolysaccharide to the outer membrane of the cell. In Rickettsia bellii (strain RML369-C), this protein is UDP-3-O-acylglucosamine N-acyltransferase.